The following is a 153-amino-acid chain: Cornifin-B (153 aa).

Disordered regions lie at residues 1–35 and 49–85; these read MSSH…PCVS and CHPK…HPKA. 14 tandem repeats follow at residues 27–34, 35–42, 43–50, 51–58, 59–66, 67–74, 75–82, 83–90, 91–98, 99–106, 107–114, 115–122, 123–130, and 131–138. Positions 27-138 are 14 X 8 AA approximate tandem repeats; sequence PPPPEPCVSQ…CQPIVPEPCP (112 aa).

This sequence belongs to the cornifin (SPRR) family. Expressed in fetal periderm, hair follicles and in the thickened epidermis of the lip and footpad. Also present in the epithelia of various tissues such as the penis, vagina, forestomach, tongue and esophagus.

Its subcellular location is the cytoplasm. In terms of biological role, cross-linked envelope protein of keratinocytes. It is a keratinocyte protein that first appears in the cell cytosol, but ultimately becomes cross-linked to membrane proteins by transglutaminase. All that results in the formation of an insoluble envelope beneath the plasma membrane. The chain is Cornifin-B (Sprr1b) from Mus musculus (Mouse).